The following is a 228-amino-acid chain: Cytochrome b5 domain-containing protein 1 (228 aa).

The Cytochrome b5 heme-binding domain maps to 17-83 (RRYFTPAEVA…DPKTRDIRKH (67 aa)). Residues Tyr-52 and His-83 each contribute to the heme site.

The protein belongs to the cytochrome b5 family.

The protein localises to the cytoplasm. It localises to the cytoskeleton. The protein resides in the cilium axoneme. Its function is as follows. Radial spoke stalk protein that binds heme under oxidizing conditions. Required for the coordinated beating of multiple cilia maybe by functioning in a redox signaling pathway. The chain is Cytochrome b5 domain-containing protein 1 from Homo sapiens (Human).